A 390-amino-acid polypeptide reads, in one-letter code: MNDFSAWAEIDLDAVAHNVAALKALTRPACRLMAAVKADGYGHGMCEVASVALESGASALGVSRIDEALDLRNHGITAPILVLGHTPAHRCREMVDQNLIQTVCALAEAQALSRAATAIGATVSVHLKVDTGMGRLGINTVVPGRTAPQEAAVKEALAVLDLPGLAAEGVFTHFACADSADKTHANAQFKRFSTLIQELEAAGRPVAVRHAANSAALIDMPETHLDMVRAGIAIYGLYPSAEVDRQKVALKPAMAFKTRVAQVKKVPAGFTVSYGATYTTPKPTVLAVVSVGYADGLNRLLSSRGFMLVRGCRVPLVGRICMDLTMLDVGGVPDVAVGDEVVIFGSQNGAFIGADEIADALNTISYEVVTSITGRVPRVYCNGSSSAVRR.

Catalysis depends on lysine 37, which acts as the Proton acceptor; specific for D-alanine. Lysine 37 bears the N6-(pyridoxal phosphate)lysine mark. Arginine 135 contacts substrate. Tyrosine 274 functions as the Proton acceptor; specific for L-alanine in the catalytic mechanism. Methionine 322 is a substrate binding site.

Belongs to the alanine racemase family. Pyridoxal 5'-phosphate serves as cofactor.

It carries out the reaction L-alanine = D-alanine. It participates in amino-acid biosynthesis; D-alanine biosynthesis; D-alanine from L-alanine: step 1/1. Catalyzes the interconversion of L-alanine and D-alanine. May also act on other amino acids. This chain is Alanine racemase (alr), found in Desulfosudis oleivorans (strain DSM 6200 / JCM 39069 / Hxd3) (Desulfococcus oleovorans).